We begin with the raw amino-acid sequence, 391 residues long: ATP phosphoribosyltransferase regulatory subunit (391 aa).

The protein belongs to the class-II aminoacyl-tRNA synthetase family. HisZ subfamily. Heteromultimer composed of HisG and HisZ subunits.

The protein resides in the cytoplasm. Its pathway is amino-acid biosynthesis; L-histidine biosynthesis; L-histidine from 5-phospho-alpha-D-ribose 1-diphosphate: step 1/9. Required for the first step of histidine biosynthesis. May allow the feedback regulation of ATP phosphoribosyltransferase activity by histidine. The protein is ATP phosphoribosyltransferase regulatory subunit of Bacillus licheniformis (strain ATCC 14580 / DSM 13 / JCM 2505 / CCUG 7422 / NBRC 12200 / NCIMB 9375 / NCTC 10341 / NRRL NRS-1264 / Gibson 46).